Reading from the N-terminus, the 293-residue chain is Zinc finger protein 80 (293 aa).

C2H2-type zinc fingers lie at residues 69 to 91 (YKCK…HQIH) and 97 to 119 (YECQ…MRIH). The C2H2-type 3; atypical zinc finger occupies 125 to 147 (CKCVECGKVFNRRSHLLCYHQIH). C2H2-type zinc fingers lie at residues 153 to 175 (YECS…RMTH), 181 to 203 (FGCK…MKIH), 209 to 231 (YKCG…SMTH), and 237 to 259 (YECK…TRSH).

The protein belongs to the krueppel C2H2-type zinc-finger protein family.

It localises to the nucleus. May be involved in transcriptional regulation. The sequence is that of Zinc finger protein 80 (ZNF80) from Macaca mulatta (Rhesus macaque).